Consider the following 294-residue polypeptide: UDP-N-acetylenolpyruvoylglucosamine reductase (294 aa).

The region spanning 26 to 189 is the FAD-binding PCMH-type domain; it reads VGGQADVLFK…IEAEFKGVSS (164 aa). R169 is an active-site residue. The Proton donor role is filled by C218. E288 is an active-site residue.

This sequence belongs to the MurB family. FAD is required as a cofactor.

The protein resides in the cytoplasm. The catalysed reaction is UDP-N-acetyl-alpha-D-muramate + NADP(+) = UDP-N-acetyl-3-O-(1-carboxyvinyl)-alpha-D-glucosamine + NADPH + H(+). It participates in cell wall biogenesis; peptidoglycan biosynthesis. Functionally, cell wall formation. In Wolbachia pipientis subsp. Culex pipiens (strain wPip), this protein is UDP-N-acetylenolpyruvoylglucosamine reductase.